A 377-amino-acid chain; its full sequence is UDP-N,N'-diacetylbacillosamine 2-epimerase (hydrolyzing) (377 aa).

The protein belongs to the UDP-N-acetylglucosamine 2-epimerase family.

The enzyme catalyses UDP-N,N'-diacetylbacillosamine + H2O = 2,4-diacetamido-2,4,6-trideoxy-alpha-D-mannopyranose + UDP + H(+). Involved in biosynthesis of legionaminic acid (5,7-diamino-3,5,7,9-tetradeoxy-D-glycero-D-galacto-non-2-ulosonic acid)(Leg), a sialic acid-like derivative that is incorporated into virulence-associated cell surface glycoconjugates such as lipopolysaccharide (LPS) which could be a key determinant in the ability of L.pneumophila to inhibit the fusion of phagosomes with lysosomes. LPS contains a majority alpha2,4-linked homomer of legionaminic acid. Catalyzes the conversion of UDP-N,N'-diacetylbacillosamine (Bac2Ac4Ac) into 2,4-diacetamido-2,4,6-trideoxymannose and UDP. The chain is UDP-N,N'-diacetylbacillosamine 2-epimerase (hydrolyzing) from Legionella pneumophila subsp. pneumophila (strain Philadelphia 1 / ATCC 33152 / DSM 7513).